The primary structure comprises 435 residues: Putative dimethyl sulfoxide reductase membrane subunit C (435 aa).

11 helical membrane passes run G22–L42, W57–L77, L95–I115, V135–L155, F186–I206, L220–V240, L257–A277, L281–G301, V304–P324, I333–F353, and V392–L412.

This sequence belongs to the NrfD family. As to quaternary structure, probable multiprotein complex that likely consists of DmsA, DmsB and DmsC.

It localises to the cell membrane. Functionally, dimethyl sulfoxide (DMSO) reductase catalyzes the reduction of dimethyl sulfoxide (DMSO) to dimethyl sulfide (DMS) during anaerobic respiration; it can also use trimethylamine N-oxide (TMAO) as terminal electron acceptor. Subunit C is proposed to be a membrane anchoring subunit. The protein is Putative dimethyl sulfoxide reductase membrane subunit C (dmsC) of Halobacterium salinarum (strain ATCC 700922 / JCM 11081 / NRC-1) (Halobacterium halobium).